Consider the following 262-residue polypeptide: Rhomboid-type serine protease 2 (262 aa).

At 1–16 (MNWKSYVFPGGHPPAA) the chain is on the cytoplasmic side. Residues 17 to 37 (LTTGLVVFLTAIYLLSFIFAL) form a helical membrane-spanning segment. Residues 38–57 (REDLSLAPESLFKLQMSRLS) lie on the Lumenal side of the membrane. Residues 58–78 (LYPLIHLSLPHLLFNVLAIWA) form a helical membrane-spanning segment. Residues 79 to 89 (PLNLFEETHGT) lie on the Cytoplasmic side of the membrane. Residues 90–110 (VYTGVFLNLSALFAGILYCLL) form a helical membrane-spanning segment. At 111 to 112 (GK) the chain is on the lumenal side. The helical transmembrane segment at 113–133 (LLYPEALVAGASGWCFTLFAY) threads the bilayer. The Nucleophile role is filled by Ser124. Residues 134–151 (YSFKESQIRPRTRIFRTD) are Cytoplasmic-facing. A helical transmembrane segment spans residues 152-168 (YSIPTLYTPLVLLVAIA). Residues 169-174 (VVIPGS) are Lumenal-facing. Residues 175 to 191 (SFWGHFFGLCVGYAIGY) traverse the membrane as a helical segment. The active site involves His179. The Cytoplasmic portion of the chain corresponds to 192–262 (KESWFNKITP…DNSGTVLGTA (71 aa)). Residues 243–262 (STETPLPLHNDNSGTVLGTA) form a disordered region. Over residues 252 to 262 (NDNSGTVLGTA) the composition is skewed to polar residues.

The protein belongs to the peptidase S54 family. Interacts with SNX3.

The protein localises to the golgi apparatus membrane. It localises to the golgi apparatus. It is found in the cis-Golgi network membrane. The enzyme catalyses Cleaves type-1 transmembrane domains using a catalytic dyad composed of serine and histidine that are contributed by different transmembrane domains.. Probable rhomboid-type serine protease that catalyzes intramembrane proteolysis. The chain is Rhomboid-type serine protease 2 (RBD2) from Saccharomyces cerevisiae (strain ATCC 204508 / S288c) (Baker's yeast).